The following is a 192-amino-acid chain: Xanthine phosphoribosyltransferase (192 aa).

Xanthine is bound by residues Leu-20 and Asn-27. Ala-128–Ala-132 contacts 5-phospho-alpha-D-ribose 1-diphosphate. Lys-156 provides a ligand contact to xanthine.

Belongs to the purine/pyrimidine phosphoribosyltransferase family. Xpt subfamily. As to quaternary structure, homodimer.

It localises to the cytoplasm. The enzyme catalyses XMP + diphosphate = xanthine + 5-phospho-alpha-D-ribose 1-diphosphate. Its pathway is purine metabolism; XMP biosynthesis via salvage pathway; XMP from xanthine: step 1/1. In terms of biological role, converts the preformed base xanthine, a product of nucleic acid breakdown, to xanthosine 5'-monophosphate (XMP), so it can be reused for RNA or DNA synthesis. This chain is Xanthine phosphoribosyltransferase, found in Lacticaseibacillus casei (strain BL23) (Lactobacillus casei).